Consider the following 154-residue polypeptide: uncharacterized protein (154 aa).

The first 21 residues, 1 to 21 (MSISSGSFAQPAAVVSSPGVT), serve as a signal peptide directing secretion.

It belongs to the ivy family.

The protein resides in the periplasm. This is an uncharacterized protein from Yersinia pestis.